The primary structure comprises 303 residues: Probable 5-dehydro-4-deoxyglucarate dehydratase (303 aa).

The protein belongs to the DapA family.

It carries out the reaction 5-dehydro-4-deoxy-D-glucarate + H(+) = 2,5-dioxopentanoate + CO2 + H2O. It functions in the pathway carbohydrate acid metabolism; D-glucarate degradation; 2,5-dioxopentanoate from D-glucarate: step 2/2. This is Probable 5-dehydro-4-deoxyglucarate dehydratase from Acinetobacter baumannii (strain ATCC 17978 / DSM 105126 / CIP 53.77 / LMG 1025 / NCDC KC755 / 5377).